The primary structure comprises 424 residues: Protein arginine N-methyltransferase 2 (424 aa).

Disordered stretches follow at residues 67-89 and 151-212; these read DEAQ…EQKS and YEPL…SSRY. Positions 71 to 89 are enriched in polar residues; it reads TETNGVNGETSSASTEQKS. Composition is skewed to low complexity over residues 163 to 173 and 187 to 201; these read TGQGEDAANEP and ETTA…ASTE. An RMT2 domain is found at 205 to 424; that stretch reads PDVTSSRYLD…YRLPLCKFMD (220 aa). S-adenosyl-L-methionine is bound by residues Y212, M241, 261 to 266, 282 to 284, 309 to 310, and D329; these read HGMGIV, EAH, and WQ.

The protein belongs to the class I-like SAM-binding methyltransferase superfamily. RMT2 methyltransferase family. In terms of assembly, monomer.

It localises to the cytoplasm. The protein resides in the nucleus. In terms of biological role, S-adenosyl-L-methionine-dependent protein-arginine N-methyltransferase that methylates the delta-nitrogen atom of arginine residues to form N5-methylarginine (type IV) in target proteins. Monomethylates ribosomal protein L12. This is Protein arginine N-methyltransferase 2 from Aspergillus fumigatus (strain ATCC MYA-4609 / CBS 101355 / FGSC A1100 / Af293) (Neosartorya fumigata).